The following is a 515-amino-acid chain: Histidine ammonia-lyase (515 aa).

A cross-link (5-imidazolinone (Ala-Gly)) is located at residues 142-144 (ASG). Position 143 is a 2,3-didehydroalanine (Ser) (Ser-143).

Belongs to the PAL/histidase family. Post-translationally, contains an active site 4-methylidene-imidazol-5-one (MIO), which is formed autocatalytically by cyclization and dehydration of residues Ala-Ser-Gly.

The protein localises to the cytoplasm. The catalysed reaction is L-histidine = trans-urocanate + NH4(+). It participates in amino-acid degradation; L-histidine degradation into L-glutamate; N-formimidoyl-L-glutamate from L-histidine: step 1/3. In Methylobacterium nodulans (strain LMG 21967 / CNCM I-2342 / ORS 2060), this protein is Histidine ammonia-lyase.